A 119-amino-acid polypeptide reads, in one-letter code: Large ribosomal subunit protein bL19c (119 aa).

This sequence belongs to the bacterial ribosomal protein bL19 family.

The protein resides in the plastid. It localises to the chloroplast. The protein is Large ribosomal subunit protein bL19c of Mesostigma viride (Green alga).